Here is a 521-residue protein sequence, read N- to C-terminus: Bifunctional purine biosynthesis protein PurH (521 aa).

In terms of domain architecture, MGS-like spans 1–145 (MIKQALISVS…KNHKDVIVIC (145 aa)).

It belongs to the PurH family.

The enzyme catalyses (6R)-10-formyltetrahydrofolate + 5-amino-1-(5-phospho-beta-D-ribosyl)imidazole-4-carboxamide = 5-formamido-1-(5-phospho-D-ribosyl)imidazole-4-carboxamide + (6S)-5,6,7,8-tetrahydrofolate. It carries out the reaction IMP + H2O = 5-formamido-1-(5-phospho-D-ribosyl)imidazole-4-carboxamide. The protein operates within purine metabolism; IMP biosynthesis via de novo pathway; 5-formamido-1-(5-phospho-D-ribosyl)imidazole-4-carboxamide from 5-amino-1-(5-phospho-D-ribosyl)imidazole-4-carboxamide (10-formyl THF route): step 1/1. It functions in the pathway purine metabolism; IMP biosynthesis via de novo pathway; IMP from 5-formamido-1-(5-phospho-D-ribosyl)imidazole-4-carboxamide: step 1/1. The polypeptide is Bifunctional purine biosynthesis protein PurH (Herminiimonas arsenicoxydans).